Reading from the N-terminus, the 229-residue chain is Trehalose-6-phosphate phosphatase-related protein (229 aa).

Asp-5 acts as the Nucleophile in catalysis. Mg(2+) is bound by residues Asp-5, Asp-7, and Asp-177. 5–7 (DYD) contributes to the substrate binding site.

Belongs to the trehalose phosphatase family. The cofactor is Mg(2+).

The catalysed reaction is alpha,alpha-trehalose 6-phosphate + H2O = alpha,alpha-trehalose + phosphate. It functions in the pathway glycan biosynthesis; trehalose biosynthesis. Its function is as follows. Removes the phosphate from trehalose 6-phosphate (Tre6P) to produce free trehalose. Also catalyzes the dephosphorylation of para-nitrophenyl phosphate (pNPP), but with lesser efficiency (in vitro). The polypeptide is Trehalose-6-phosphate phosphatase-related protein (Thermoplasma acidophilum (strain ATCC 25905 / DSM 1728 / JCM 9062 / NBRC 15155 / AMRC-C165)).